The sequence spans 629 residues: ATP-dependent RNA helicase DeaD (629 aa).

The Q motif motif lies at 6–34 (TTFADLGLKAPILEALNDLGYEKPSPIQA). The 172-residue stretch at 37 to 208 (IPHLLNGRDV…RRFMKEPQEV (172 aa)) folds into the Helicase ATP-binding domain. Position 50–57 (50–57 (AQTGSGKT)) interacts with ATP. The DEAD box motif lies at 156–159 (DEAD). The 148-residue stretch at 232-379 (KNEALVRFLE…EVELPNAELL (148 aa)) folds into the Helicase C-terminal domain. Disordered stretches follow at residues 438 to 481 (LIVP…RERR) and 560 to 629 (LGDA…GGDA). Composition is skewed to basic and acidic residues over residues 446-481 (MRPK…RERR) and 568-629 (GGER…GGDA).

This sequence belongs to the DEAD box helicase family. DeaD/CsdA subfamily. As to quaternary structure, interacts with the 50S ribosomal subunit upon shifting to 15 degrees Celsius. Also found associated with the RNA degradosome at 15 degrees Celsius; binds RNase E (rne).

The protein localises to the cytoplasm. The enzyme catalyses ATP + H2O = ADP + phosphate + H(+). Its function is as follows. DEAD-box RNA helicase involved in various cellular processes at low temperature, including ribosome biogenesis, mRNA degradation and translation initiation. Exhibits RNA-stimulated ATP hydrolysis and RNA unwinding activity at low temperature. Involved in 50S ribosomal subunit assembly, acting after SrmB, and could also play a role in the biogenesis of the 30S ribosomal subunit. In addition, is involved in mRNA decay, via formation of a cold-shock degradosome with RNase E. Also stimulates translation of some mRNAs, probably at the level of initiation. This chain is ATP-dependent RNA helicase DeaD, found in Escherichia coli (strain K12).